Reading from the N-terminus, the 371-residue chain is MPHHYILTLFGLLPVATNISTWWNFGSMLLTCLGLQVLTGFFLAVHYTANINLAFSSIVHISRDVPYGWMMQNLHAIGASMFFICIYIHIARGLYYGSYLNKETWMSGITLLITLMATAFFGYVLTWGQMSLWAATVITNLLTAVPYLGTSLTTWLWGGFAINDPTLTRFFALHFILPFAIISLSSLHIILLHEEGSSNPLGTNPDIDKIPFHPYHSHKDLLLLTLMIMSLFIISSFFPDIFNDPDNFSKANPLVTPQHIKPEWYFLFAYGILRSIPNKLGGALALVMSIMILFIIPFTHTARLRPMTFRPLSQLMFWTLVSTFITITWAATKPVEPPFIVISQVTSSLYFTFFLSTPILGWAENKMMNIS.

Transmembrane regions (helical) follow at residues 25–45 (FGSMLLTCLGLQVLTGFFLAV), 69–90 (WMMQNLHAIGASMFFICIYIHI), 105–125 (WMSGITLLITLMATAFFGYVL), and 170–190 (FFALHFILPFAIISLSSLHII). His75 and His89 together coordinate heme b. Heme b is bound by residues His174 and His188. Residue His193 participates in a ubiquinone binding. 4 consecutive transmembrane segments (helical) span residues 218–238 (HKDLLLLTLMIMSLFIISSFF), 280–300 (LGGALALVMSIMILFIIPFTH), 312–332 (LSQLMFWTLVSTFITITWAAT), and 339–358 (FIVISQVTSSLYFTFFLSTP).

This sequence belongs to the cytochrome b family. In terms of assembly, the cytochrome bc1 complex contains 3 respiratory subunits (MT-CYB, CYC1 and UQCRFS1), 2 core proteins (UQCRC1 and UQCRC2) and probably 6 low-molecular weight proteins. Heme b serves as cofactor.

It is found in the mitochondrion inner membrane. Its function is as follows. Component of the ubiquinol-cytochrome c reductase complex (complex III or cytochrome b-c1 complex) that is part of the mitochondrial respiratory chain. The b-c1 complex mediates electron transfer from ubiquinol to cytochrome c. Contributes to the generation of a proton gradient across the mitochondrial membrane that is then used for ATP synthesis. This Aspidites melanocephalus (Black-headed python) protein is Cytochrome b (MT-CYB).